The chain runs to 226 residues: 7-cyano-7-deazaguanine synthase (226 aa).

L8–L18 contacts ATP. The Zn(2+) site is built by C190, C198, C201, and C204.

This sequence belongs to the QueC family. Homodimer. Zn(2+) is required as a cofactor.

The enzyme catalyses 7-carboxy-7-deazaguanine + NH4(+) + ATP = 7-cyano-7-deazaguanine + ADP + phosphate + H2O + H(+). The protein operates within purine metabolism; 7-cyano-7-deazaguanine biosynthesis. Functionally, catalyzes the ATP-dependent conversion of 7-carboxy-7-deazaguanine (CDG) to 7-cyano-7-deazaguanine (preQ(0)). This chain is 7-cyano-7-deazaguanine synthase, found in Clostridium kluyveri (strain ATCC 8527 / DSM 555 / NBRC 12016 / NCIMB 10680 / K1).